The chain runs to 244 residues: ATP synthase subunit a (244 aa).

7 consecutive transmembrane segments (helical) span residues 17 to 37, 74 to 94, 112 to 132, 148 to 168, 171 to 191, 196 to 216, and 217 to 237; these read LSNVLMITIASIIVLLIAVLT, PFLALGVTLLMYIFVSNMLGL, DPAITMTLAVMVMGLTHYYGV, IPLLVPLKIIEEFANTLTLGL, YGNIFAGEILLGLLAGLATNF, IALGIIGTLGAIVPMIVWQAF, and SLFVGTIQAFIFTMLTMVYIS.

The protein belongs to the ATPase A chain family. In terms of assembly, F-type ATPases have 2 components, CF(1) - the catalytic core - and CF(0) - the membrane proton channel. CF(1) has five subunits: alpha(3), beta(3), gamma(1), delta(1), epsilon(1). CF(0) has three main subunits: a(1), b(2) and c(9-12). The alpha and beta chains form an alternating ring which encloses part of the gamma chain. CF(1) is attached to CF(0) by a central stalk formed by the gamma and epsilon chains, while a peripheral stalk is formed by the delta and b chains.

It is found in the cell membrane. Its function is as follows. Key component of the proton channel; it plays a direct role in the translocation of protons across the membrane. This chain is ATP synthase subunit a, found in Bacillus pumilus (strain SAFR-032).